The sequence spans 349 residues: Phosphoribosylformylglycinamidine cyclo-ligase (349 aa).

Belongs to the AIR synthase family.

It localises to the cytoplasm. The catalysed reaction is 2-formamido-N(1)-(5-O-phospho-beta-D-ribosyl)acetamidine + ATP = 5-amino-1-(5-phospho-beta-D-ribosyl)imidazole + ADP + phosphate + H(+). The protein operates within purine metabolism; IMP biosynthesis via de novo pathway; 5-amino-1-(5-phospho-D-ribosyl)imidazole from N(2)-formyl-N(1)-(5-phospho-D-ribosyl)glycinamide: step 2/2. The protein is Phosphoribosylformylglycinamidine cyclo-ligase of Bordetella petrii (strain ATCC BAA-461 / DSM 12804 / CCUG 43448).